A 283-amino-acid chain; its full sequence is Hydrogenase expression/formation protein HoxQ (283 aa).

The disordered stretch occupies residues 1-29 (MNDDLPILPPGFGPGSHGEEERPDCPSMP).

The protein belongs to the HupH/HyaF family.

This chain is Hydrogenase expression/formation protein HoxQ (hoxQ), found in Azotobacter vinelandii.